Here is an 837-residue protein sequence, read N- to C-terminus: Protein TRANSPARENT TESTA 9 (837 aa).

The 151-residue stretch at 42 to 192 (LRSIAEILTY…AVRALTLNVY (151 aa)) folds into the FPL domain. Residues 366–386 (TEEANQQCSSTAAGMSDDGNS) are disordered. The span at 368–378 (EANQQCSSTAA) shows a compositional bias: polar residues.

This sequence belongs to the CLEC16A/gop-1 family.

It localises to the golgi apparatus membrane. In terms of biological role, involved in membrane trafficking and vacuole development through membrane fusion at the vacuole. Required for membrane trafficking machinery and accumulation of flavonoids in the seed coat. The protein is Protein TRANSPARENT TESTA 9 of Arabidopsis thaliana (Mouse-ear cress).